The sequence spans 299 residues: tRNA dimethylallyltransferase (299 aa).

5–12 (GPTASGKT) contacts ATP. Substrate is bound at residue 7–12 (TASGKT). 3 interaction with substrate tRNA regions span residues 30–33 (DSAL), 154–158 (QRLSR), and 235–240 (RCVGYR).

It belongs to the IPP transferase family. As to quaternary structure, monomer. Requires Mg(2+) as cofactor.

The enzyme catalyses adenosine(37) in tRNA + dimethylallyl diphosphate = N(6)-dimethylallyladenosine(37) in tRNA + diphosphate. Its function is as follows. Catalyzes the transfer of a dimethylallyl group onto the adenine at position 37 in tRNAs that read codons beginning with uridine, leading to the formation of N6-(dimethylallyl)adenosine (i(6)A). This is tRNA dimethylallyltransferase from Shewanella denitrificans (strain OS217 / ATCC BAA-1090 / DSM 15013).